The chain runs to 180 residues: Cytokinin-beta-glucosidase 2 (180 aa).

Hydrolyzes cytokinin glucosides thus liberating free cytokinins. The polypeptide is Cytokinin-beta-glucosidase 2 (ROLC2) (Panax ginseng (Korean ginseng)).